Reading from the N-terminus, the 357-residue chain is Peptide chain release factor 1 (357 aa).

Glutamine 234 is modified (N5-methylglutamine).

This sequence belongs to the prokaryotic/mitochondrial release factor family. Methylated by PrmC. Methylation increases the termination efficiency of RF1.

It localises to the cytoplasm. Peptide chain release factor 1 directs the termination of translation in response to the peptide chain termination codons UAG and UAA. The protein is Peptide chain release factor 1 of Nocardioides sp. (strain ATCC BAA-499 / JS614).